The chain runs to 332 residues: RING-H2 finger protein ATL81 (332 aa).

The first 19 residues, 1–19 (MYDLTFLLISLFPIDITLP), serve as a signal peptide directing secretion. Residues 76 to 96 (IVLTGSLLFIIFTGFFSFFFC) traverse the membrane as a helical segment. The RING-type; atypical zinc finger occupies 154–196 (CSICLTEFMDDDTIRLISTCNHSFHTICIDLWFEGHKTCPVCR).

Belongs to the RING-type zinc finger family. ATL subfamily.

The protein localises to the membrane. It carries out the reaction S-ubiquitinyl-[E2 ubiquitin-conjugating enzyme]-L-cysteine + [acceptor protein]-L-lysine = [E2 ubiquitin-conjugating enzyme]-L-cysteine + N(6)-ubiquitinyl-[acceptor protein]-L-lysine.. Its pathway is protein modification; protein ubiquitination. In Arabidopsis thaliana (Mouse-ear cress), this protein is RING-H2 finger protein ATL81 (ATL81).